We begin with the raw amino-acid sequence, 249 residues long: MGVWLLSLITVLLSLALETAGQGERIIDGYKCKEGSHPWQVALLKGNQLHCGGVLVDKYWVLTAAHCKMGQYQVQLGSDKIGDQSAQKIKATKSFRHPGYSTKTHVNDIMLVRLDEPVKMSSKVEAVQLPEHCEPPGTSCTVSGWGTTTSPDVTFPSDLMCSDVKLISSRECKKVYKDLLGKTMLCAGIPDSKTNTCNGDSGGPLVCNDTLQGLVSWGTYPCGQPNDPGVYTQVCKYKRWVMETMKTHR.

Positions 1–21 (MGVWLLSLITVLLSLALETAG) are cleaved as a signal peptide. The propeptide at 22 to 25 (QGER) is activation peptide. Positions 26 to 246 (IIDGYKCKEG…YKRWVMETMK (221 aa)) are serine protease. 6 disulfides stabilise this stretch: Cys32-Cys161, Cys51-Cys67, Cys133-Cys235, Cys140-Cys207, Cys172-Cys186, and Cys197-Cys222. Active-site charge relay system residues include His66 and Asp108. The active-site Charge relay system is Ser201.

The protein belongs to the peptidase S1 family. Kallikrein subfamily. As to expression, expressed in skin and, at lower levels, in lung, kidney, brain, heart and spleen. In skin, expressed in high suprabasal keratinocytes and in the luminal parts of hair follicles. Not detected in liver and skeletal muscle.

The protein localises to the secreted. The catalysed reaction is Cleavage of proteins with aromatic side chains in the P1 position.. Its activity is regulated as follows. Inhibited by Zn2+ and Cu2+ at low micromolar concentrations. Inhibited by SERPINA12. Functionally, may catalyze the degradation of intercellular cohesive structures in the cornified layer of the skin in the continuous shedding of cells from the skin surface. Specific for amino acid residues with aromatic side chains in the P1 position. Cleaves insulin A chain at '14-Tyr-|-Gln-15' and insulin B chain at '6-Leu-|-Cys-7', '16-Tyr-|-Leu-17', '25-Phe-|-Tyr-26' and '26-Tyr-|-Thr-27'. Could play a role in the activation of precursors to inflammatory cytokines. This is Kallikrein-7 (Klk7) from Mus musculus (Mouse).